A 421-amino-acid polypeptide reads, in one-letter code: UDP-N-acetylglucosamine 1-carboxyvinyltransferase (421 aa).

Residue 22–23 (KN) participates in phosphoenolpyruvate binding. R93 is a UDP-N-acetyl-alpha-D-glucosamine binding site. Catalysis depends on C117, which acts as the Proton donor. The residue at position 117 (C117) is a 2-(S-cysteinyl)pyruvic acid O-phosphothioketal. UDP-N-acetyl-alpha-D-glucosamine-binding positions include 122–126 (RPVDL), D308, and V330.

It belongs to the EPSP synthase family. MurA subfamily.

It localises to the cytoplasm. The enzyme catalyses phosphoenolpyruvate + UDP-N-acetyl-alpha-D-glucosamine = UDP-N-acetyl-3-O-(1-carboxyvinyl)-alpha-D-glucosamine + phosphate. It functions in the pathway cell wall biogenesis; peptidoglycan biosynthesis. Functionally, cell wall formation. Adds enolpyruvyl to UDP-N-acetylglucosamine. The polypeptide is UDP-N-acetylglucosamine 1-carboxyvinyltransferase (Ectopseudomonas mendocina (strain ymp) (Pseudomonas mendocina)).